Consider the following 198-residue polypeptide: Thymidine kinase (198 aa).

ATP is bound by residues Gly9–Ser16 and Asp85–Gln88. Residue Glu86 is the Proton acceptor of the active site. 4 residues coordinate Zn(2+): Cys143, Cys146, Cys180, and His183.

The protein belongs to the thymidine kinase family. In terms of assembly, homotetramer.

Its subcellular location is the cytoplasm. It catalyses the reaction thymidine + ATP = dTMP + ADP + H(+). This chain is Thymidine kinase, found in Streptococcus thermophilus (strain ATCC BAA-250 / LMG 18311).